A 344-amino-acid polypeptide reads, in one-letter code: Serine proteinase inhibitor 2 (344 aa).

The protein belongs to the serpin family. Poxviruses subfamily.

Its subcellular location is the host cytoplasm. Its function is as follows. Viral serpin that inhibits both cysteine and serine proteinases involved in the regulation of host inflammatory and apoptosis processes. Major anti-apoptotic protein which inhibits both intrinsic and extrinsic pathways and strongly cleaves host CASP1 and CASP8 but is a rather poor inhibitor of host CASP3. Prevents the proteolytic activity of host interleukin-1-beta converting enzyme (ICE) and ICE-like enzymes. Can also block apoptosis through host tumor necrosis factor (TNF) receptor. The inhibition of host ICE is an example of a 'cross-class' interaction, in which a serpin inhibits a non-serine proteinase. Also inhibits granzyme B. The protein is Serine proteinase inhibitor 2 (OPG199) of Cynomys gunnisoni (Gunnison's prairie dog).